The chain runs to 66 residues: DNA gyrase inhibitor YacG (66 aa).

Residues cysteine 9, cysteine 12, cysteine 28, and cysteine 32 each contribute to the Zn(2+) site.

Belongs to the DNA gyrase inhibitor YacG family. As to quaternary structure, interacts with GyrB. It depends on Zn(2+) as a cofactor.

Functionally, inhibits all the catalytic activities of DNA gyrase by preventing its interaction with DNA. Acts by binding directly to the C-terminal domain of GyrB, which probably disrupts DNA binding by the gyrase. The chain is DNA gyrase inhibitor YacG from Pseudomonas fluorescens (strain SBW25).